The sequence spans 247 residues: Triosephosphate isomerase (247 aa).

The substrate site is built by Asn-10 and Lys-12. His-94 functions as the Electrophile in the catalytic mechanism. Catalysis depends on Glu-164, which acts as the Proton acceptor.

This sequence belongs to the triosephosphate isomerase family. In terms of assembly, homodimer.

The catalysed reaction is D-glyceraldehyde 3-phosphate = dihydroxyacetone phosphate. The protein operates within carbohydrate biosynthesis; gluconeogenesis. Its pathway is carbohydrate degradation; glycolysis; D-glyceraldehyde 3-phosphate from glycerone phosphate: step 1/1. The sequence is that of Triosephosphate isomerase (Tpi) from Drosophila melanogaster (Fruit fly).